A 191-amino-acid chain; its full sequence is Ribosomal RNA small subunit methyltransferase G (191 aa).

S-adenosyl-L-methionine contacts are provided by residues Gly-62, Leu-67, Ile-111–Glu-112, and Arg-124.

This sequence belongs to the methyltransferase superfamily. RNA methyltransferase RsmG family.

It localises to the cytoplasm. It carries out the reaction guanosine(527) in 16S rRNA + S-adenosyl-L-methionine = N(7)-methylguanosine(527) in 16S rRNA + S-adenosyl-L-homocysteine. In terms of biological role, specifically methylates the N7 position of guanine in position 527 of 16S rRNA. The protein is Ribosomal RNA small subunit methyltransferase G of Rickettsia rickettsii (strain Sheila Smith).